The sequence spans 316 residues: Heme oxygenase 2 (316 aa).

Acidic residues predominate over residues 1–12; the sequence is MSAEVETSEGVD. The interval 1-29 is disordered; it reads MSAEVETSEGVDESEKKNSGALEKENQMR. Ser-2 is modified (N-acetylserine). Position 2 is a phosphoserine (Ser-2). Residues 13-27 are compositionally biased toward basic and acidic residues; it reads ESEKKNSGALEKENQ. His-45 provides a ligand contact to heme b. HRM repeat units follow at residues 264 to 269 and 281 to 286; these read KCPFYA and SCPFRT. S-nitrosocysteine is present on residues Cys-265 and Cys-282.

Belongs to the heme oxygenase family. In terms of processing, S-nitrosylated by BLVRB.

It localises to the microsome. Its subcellular location is the endoplasmic reticulum. The enzyme catalyses heme b + 3 reduced [NADPH--hemoprotein reductase] + 3 O2 = biliverdin IXalpha + CO + Fe(2+) + 3 oxidized [NADPH--hemoprotein reductase] + 3 H2O + H(+). Its function is as follows. Heme oxygenase cleaves the heme ring at the alpha methene bridge to form biliverdin. Biliverdin is subsequently converted to bilirubin by biliverdin reductase. Under physiological conditions, the activity of heme oxygenase is highest in the spleen, where senescent erythrocytes are sequestrated and destroyed. Heme oxygenase 2 could be implicated in the production of carbon monoxide in brain where it could act as a neurotransmitter. This Macaca fascicularis (Crab-eating macaque) protein is Heme oxygenase 2 (HMOX2).